A 512-amino-acid chain; its full sequence is Replication initiation protein (512 aa).

Its function is as follows. Essential for replication. Binds specifically to a 60-bp region corresponding to the putative origin of replication of pXO2. Also binds nonspecifically to single-stranded DNA with lower affinity. This Bacillus anthracis protein is Replication initiation protein (repS).